Here is a 268-residue protein sequence, read N- to C-terminus: Nickel import ATP-binding protein NikE (268 aa).

The 249-residue stretch at 4–252 folds into the ABC transporter domain; sequence LNISGLSHHY…SSDAGRVLQN (249 aa). ATP is bound at residue 45-52; the sequence is GRSGCGKS.

It belongs to the ABC transporter superfamily. Nickel importer (TC 3.A.1.5.3) family. As to quaternary structure, the complex is composed of two ATP-binding proteins (NikD and NikE), two transmembrane proteins (NikB and NikC) and a solute-binding protein (NikA).

The protein localises to the cell inner membrane. The enzyme catalyses Ni(2+)(out) + ATP + H2O = Ni(2+)(in) + ADP + phosphate + H(+). In terms of biological role, part of the ABC transporter complex NikABCDE involved in nickel import. Responsible for energy coupling to the transport system. This chain is Nickel import ATP-binding protein NikE, found in Escherichia coli (strain K12).